Reading from the N-terminus, the 122-residue chain is Large ribosomal subunit protein uL18 (122 aa).

Belongs to the universal ribosomal protein uL18 family. Part of the 50S ribosomal subunit; part of the 5S rRNA/L5/L18/L25 subcomplex. Contacts the 5S and 23S rRNAs.

Functionally, this is one of the proteins that bind and probably mediate the attachment of the 5S RNA into the large ribosomal subunit, where it forms part of the central protuberance. The chain is Large ribosomal subunit protein uL18 from Dictyoglomus thermophilum (strain ATCC 35947 / DSM 3960 / H-6-12).